The chain runs to 695 residues: Threonine--tRNA ligase (695 aa).

Residues 1-66 enclose the TGS domain; the sequence is MSAPARPAPA…DTDVEVTPVA (66 aa). The interval 263 to 569 is catalytic; it reads DHRKLGVELD…LTEHYAGAFP (307 aa). Zn(2+)-binding residues include C368, H419, and H546.

The protein belongs to the class-II aminoacyl-tRNA synthetase family. As to quaternary structure, homodimer. Zn(2+) is required as a cofactor.

The protein localises to the cytoplasm. It carries out the reaction tRNA(Thr) + L-threonine + ATP = L-threonyl-tRNA(Thr) + AMP + diphosphate + H(+). Functionally, catalyzes the attachment of threonine to tRNA(Thr) in a two-step reaction: L-threonine is first activated by ATP to form Thr-AMP and then transferred to the acceptor end of tRNA(Thr). Also edits incorrectly charged L-seryl-tRNA(Thr). The sequence is that of Threonine--tRNA ligase from Mycolicibacterium gilvum (strain PYR-GCK) (Mycobacterium gilvum (strain PYR-GCK)).